A 479-amino-acid chain; its full sequence is Probable cytosol aminopeptidase (479 aa).

2 residues coordinate Mn(2+): lysine 251 and aspartate 256. Residue lysine 263 is part of the active site. Mn(2+) contacts are provided by aspartate 274, aspartate 333, and glutamate 335. Arginine 337 is an active-site residue.

Belongs to the peptidase M17 family. Mn(2+) is required as a cofactor.

The protein localises to the cytoplasm. It catalyses the reaction Release of an N-terminal amino acid, Xaa-|-Yaa-, in which Xaa is preferably Leu, but may be other amino acids including Pro although not Arg or Lys, and Yaa may be Pro. Amino acid amides and methyl esters are also readily hydrolyzed, but rates on arylamides are exceedingly low.. It carries out the reaction Release of an N-terminal amino acid, preferentially leucine, but not glutamic or aspartic acids.. Presumably involved in the processing and regular turnover of intracellular proteins. Catalyzes the removal of unsubstituted N-terminal amino acids from various peptides. This is Probable cytosol aminopeptidase from Albidiferax ferrireducens (strain ATCC BAA-621 / DSM 15236 / T118) (Rhodoferax ferrireducens).